The chain runs to 324 residues: Muscleblind-like protein (324 aa).

2 consecutive C3H1-type zinc fingers follow at residues 38-66 (WLQV…HPPP) and 72-100 (QGRV…HPPQ).

It belongs to the muscleblind family. Expressed in neurons around the pharynx.

The protein localises to the nucleus. In terms of biological role, binds to RNA with repeat sequences 5'-CUG-3' and 5'-CCUG-3'. The polypeptide is Muscleblind-like protein (mbl-1) (Caenorhabditis elegans).